Here is a 523-residue protein sequence, read N- to C-terminus: Glycine betaine transporter 1 (523 aa).

Helical transmembrane passes span 33 to 53 (VFGISAGFIALFLVAALVLDA), 71 to 91 (FDWLFIIAGNIFVIFCLALIV), 109 to 129 (SFMSWLAMLFAAGMGIGLMFW), 165 to 185 (FHWGLHPWAIYGVVALSLAFF), 214 to 234 (IVDILAVLATLFGLATSLGLG), 251 to 271 (GLGLQIVVITVVTLLAVVSVV), 286 to 306 (MVVAFLLLILVGLIGWAASLG), 337 to 357 (WTVFYWAWWISWSPFVGMFIA), 372 to 392 (VLIVPTVVTVVWMSVFGGLAI), 420 to 440 (VLPFGNILSIIAVVLVLVFFI), 467 to 487 (VFWAFMEGAIAVALLWIGGSE), and 496 to 516 (AISTALPFTFILLAMCVSLLM).

This sequence belongs to the BCCT transporter (TC 2.A.15) family.

Its subcellular location is the cell inner membrane. Involved in the uptake of the osmoprotectant glycine betaine. This chain is Glycine betaine transporter 1, found in Vibrio parahaemolyticus serotype O3:K6 (strain RIMD 2210633).